A 165-amino-acid chain; its full sequence is Ribosome maturation factor RimM (165 aa).

The PRC barrel domain maps to 90 to 161 (EDEYFIVDLV…LITIRPSGEW (72 aa)).

The protein belongs to the RimM family. As to quaternary structure, binds ribosomal protein uS19.

It is found in the cytoplasm. Functionally, an accessory protein needed during the final step in the assembly of 30S ribosomal subunit, possibly for assembly of the head region. Essential for efficient processing of 16S rRNA. May be needed both before and after RbfA during the maturation of 16S rRNA. It has affinity for free ribosomal 30S subunits but not for 70S ribosomes. The polypeptide is Ribosome maturation factor RimM (Clostridium perfringens (strain SM101 / Type A)).